We begin with the raw amino-acid sequence, 217 residues long: Ras-related protein RABA2c (217 aa).

GTP contacts are provided by residues 19–27, 38–44, 67–71, 125–128, and 155–157; these read GDSGVGKSN, CLESKST, DTAGQ, NKSD, and SAL. The short motif at 41 to 49 is the Effector region element; it reads SKSTIGVEF. Residues 195 to 217 are disordered; it reads PGQGTTINVDDTSGGAKRACCSS. 2 S-geranylgeranyl cysteine lipidation sites follow: Cys-214 and Cys-215.

It belongs to the small GTPase superfamily. Rab family. In terms of tissue distribution, expressed in root tips.

It localises to the endosome membrane. Its subcellular location is the golgi apparatus. The protein resides in the trans-Golgi network membrane. Its function is as follows. Intracellular vesicle trafficking and protein transport. This Arabidopsis thaliana (Mouse-ear cress) protein is Ras-related protein RABA2c (RABA2C).